The chain runs to 315 residues: MIKLGIVMDPISEINIKKDSSFAMLMAAQERGYQLFYMEMADLAIVNGVAMGNMRPLKVMNDANHWFELGEAKDTPLSELNVVLMRKDPPFDTEYIYATYMLERAEEQGVLIVNKPQSLRDANEKLFTAWFSEFTPETIVTRDANRIRAFHQAKGDIILKPLDGMGGTSIFRVKQDDPNLGVIIETLTQYGNQYAMAQAFIPEITKGDKRILVVDGEPVPYALARIPKKGETRGNLAAGGSGVAQPLSDSDWKIARAIGPELKKRGLIFVGLDVIGDKLTEINVTSPTCIREIQAAFDVDITGMLFDAIETRLGQ.

Residues 125-310 (KLFTAWFSEF…ITGMLFDAIE (186 aa)) form the ATP-grasp domain. 151 to 207 (HQAKGDIILKPLDGMGGTSIFRVKQDDPNLGVIIETLTQYGNQYAMAQAFIPEITKG) serves as a coordination point for ATP. Positions 281 and 283 each coordinate Mg(2+).

It belongs to the prokaryotic GSH synthase family. It depends on Mg(2+) as a cofactor. Mn(2+) is required as a cofactor.

The catalysed reaction is gamma-L-glutamyl-L-cysteine + glycine + ATP = glutathione + ADP + phosphate + H(+). Its pathway is sulfur metabolism; glutathione biosynthesis; glutathione from L-cysteine and L-glutamate: step 2/2. This chain is Glutathione synthetase, found in Shewanella oneidensis (strain ATCC 700550 / JCM 31522 / CIP 106686 / LMG 19005 / NCIMB 14063 / MR-1).